Consider the following 103-residue polypeptide: N(4)-acetylcytidine amidohydrolase (103 aa).

The region spanning 6 to 94 (ITFFQRFQND…IAEIYPNQTQ (89 aa)) is the ASCH domain. Lysine 21 serves as the catalytic Proton acceptor. Threonine 24 serves as the catalytic Nucleophile. The active-site Proton donor is the glutamate 74.

Belongs to the N(4)-acetylcytidine amidohydrolase family.

The enzyme catalyses N(4)-acetylcytidine + H2O = cytidine + acetate + H(+). It catalyses the reaction N(4)-acetyl-2'-deoxycytidine + H2O = 2'-deoxycytidine + acetate + H(+). It carries out the reaction N(4)-acetylcytosine + H2O = cytosine + acetate + H(+). In terms of biological role, catalyzes the hydrolysis of N(4)-acetylcytidine (ac4C). The polypeptide is N(4)-acetylcytidine amidohydrolase (yqfB) (Salmonella typhi).